The sequence spans 159 residues: LVTEIADTDNFINLSFLRLFRAARLIKLLRQGYTIRILLWTFVQSFKALPYVCLLIAMLFFIYAIIGMQVFGNIALNDETSINRHNNFRTFLQALMLLFRSATGEAWHEIMLSCLSNRACDPLSGLTKNECGSDFAYFYFVSFIFLCSFLMLNLFVAVI.

A helical membrane pass occupies residues leucine 1–isoleucine 5. One copy of the IV repeat lies at leucine 1–isoleucine 159. Topologically, residues alanine 6–asparagine 13 are extracellular. Asparagine 13 carries N-linked (GlcNAc...) asparagine glycosylation. A helical membrane pass occupies residues leucine 14–glycine 32. Residues tyrosine 33–tyrosine 51 are Cytoplasmic-facing. Residues valine 52–phenylalanine 71 traverse the membrane as a helical segment. Over glycine 72–phenylalanine 135 the chain is Extracellular. Residues alanine 136–phenylalanine 155 traverse the membrane as a helical segment. At valine 156–isoleucine 159 the chain is on the cytoplasmic side.

Belongs to the calcium channel alpha-1 subunit (TC 1.A.1.11) family. CACNA1B subfamily. As to quaternary structure, multisubunit complex consisting of alpha-1, alpha-2, beta and delta subunits in a 1:1:1:1 ratio. The channel activity is directed by the pore-forming and voltage-sensitive alpha-1 subunit. In many cases, this subunit is sufficient to generate voltage-sensitive calcium channel activity. The auxiliary subunits beta and alpha-2/delta linked by a disulfide bridge regulate the channel activity. Interacts with RIMBP2. Post-translationally, phosphorylated in vitro by CaM-kinase II, PKA, PKC and CGPK.

It localises to the membrane. It carries out the reaction Ca(2+)(in) = Ca(2+)(out). In terms of biological role, voltage-sensitive calcium channels (VSCC) mediate the entry of calcium ions into excitable cells and are also involved in a variety of calcium-dependent processes, including muscle contraction, hormone or neurotransmitter release, gene expression, cell motility, cell division and cell death. This alpha-1B subunit gives rise to N-type calcium currents. N-type calcium channels belong to the 'high-voltage activated' (HVA) group. They are involved in pain signaling. Calcium channels containing alpha-1B subunit may play a role in directed migration of immature neurons. Mediates Ca(2+) release probability at hippocampal neuronal soma and synaptic terminals. This is Voltage-dependent N-type calcium channel subunit alpha-1B (CACNA1B) from Gallus gallus (Chicken).